The following is a 277-amino-acid chain: Bifunctional protein FolD (277 aa).

Residues 164–166 (GRS), serine 189, and threonine 230 contribute to the NADP(+) site.

This sequence belongs to the tetrahydrofolate dehydrogenase/cyclohydrolase family. In terms of assembly, homodimer.

It carries out the reaction (6R)-5,10-methylene-5,6,7,8-tetrahydrofolate + NADP(+) = (6R)-5,10-methenyltetrahydrofolate + NADPH. The catalysed reaction is (6R)-5,10-methenyltetrahydrofolate + H2O = (6R)-10-formyltetrahydrofolate + H(+). The protein operates within one-carbon metabolism; tetrahydrofolate interconversion. In terms of biological role, catalyzes the oxidation of 5,10-methylenetetrahydrofolate to 5,10-methenyltetrahydrofolate and then the hydrolysis of 5,10-methenyltetrahydrofolate to 10-formyltetrahydrofolate. The chain is Bifunctional protein FolD from Clostridium perfringens (strain ATCC 13124 / DSM 756 / JCM 1290 / NCIMB 6125 / NCTC 8237 / Type A).